The chain runs to 79 residues: ATP synthase subunit c (79 aa).

The next 2 membrane-spanning stretches (helical) occupy residues 11–31 (IAAA…IGIL) and 53–73 (FFIV…LSLY).

This sequence belongs to the ATPase C chain family. In terms of assembly, F-type ATPases have 2 components, F(1) - the catalytic core - and F(0) - the membrane proton channel. F(1) has five subunits: alpha(3), beta(3), gamma(1), delta(1), epsilon(1). F(0) has three main subunits: a(1), b(2) and c(10-14). The alpha and beta chains form an alternating ring which encloses part of the gamma chain. F(1) is attached to F(0) by a central stalk formed by the gamma and epsilon chains, while a peripheral stalk is formed by the delta and b chains.

It is found in the cell inner membrane. Functionally, f(1)F(0) ATP synthase produces ATP from ADP in the presence of a proton or sodium gradient. F-type ATPases consist of two structural domains, F(1) containing the extramembraneous catalytic core and F(0) containing the membrane proton channel, linked together by a central stalk and a peripheral stalk. During catalysis, ATP synthesis in the catalytic domain of F(1) is coupled via a rotary mechanism of the central stalk subunits to proton translocation. Key component of the F(0) channel; it plays a direct role in translocation across the membrane. A homomeric c-ring of between 10-14 subunits forms the central stalk rotor element with the F(1) delta and epsilon subunits. In Blochmanniella floridana, this protein is ATP synthase subunit c.